The following is a 381-amino-acid chain: tRNA pseudouridine synthase D (381 aa).

The Nucleophile role is filled by D81. Residues 160-335 form the TRUD domain; sequence GMPNYFGSQR…TLGSRRFFWV (176 aa).

The protein belongs to the pseudouridine synthase TruD family.

The enzyme catalyses uridine(13) in tRNA = pseudouridine(13) in tRNA. Responsible for synthesis of pseudouridine from uracil-13 in transfer RNAs. The chain is tRNA pseudouridine synthase D from Helicobacter pylori (strain P12).